We begin with the raw amino-acid sequence, 387 residues long: Phosphoglycerate kinase (387 aa).

Residues 21 to 23 (DLN), Arg-36, and 59 to 62 (HLGR) each bind substrate. Residue Lys-84 is modified to N6-acetyllysine. Arg-113 and Arg-146 together coordinate substrate. Residues Lys-197, Glu-314, and 340-343 (GGDT) contribute to the ATP site.

It belongs to the phosphoglycerate kinase family. Monomer.

The protein resides in the cytoplasm. The catalysed reaction is (2R)-3-phosphoglycerate + ATP = (2R)-3-phospho-glyceroyl phosphate + ADP. It functions in the pathway carbohydrate degradation; glycolysis; pyruvate from D-glyceraldehyde 3-phosphate: step 2/5. The sequence is that of Phosphoglycerate kinase from Escherichia coli O9:H4 (strain HS).